The chain runs to 155 residues: Large ribosomal subunit protein uL30 (155 aa).

This sequence belongs to the universal ribosomal protein uL30 family. In terms of assembly, part of the 50S ribosomal subunit.

In Pyrococcus horikoshii (strain ATCC 700860 / DSM 12428 / JCM 9974 / NBRC 100139 / OT-3), this protein is Large ribosomal subunit protein uL30.